We begin with the raw amino-acid sequence, 252 residues long: 14-3-3 protein homolog 1 (252 aa).

The protein belongs to the 14-3-3 family.

The sequence is that of 14-3-3 protein homolog 1 from Schistosoma mansoni (Blood fluke).